Reading from the N-terminus, the 601-residue chain is uncharacterized protein (601 aa).

Residues 127 to 364 (SSLFSSGSPP…PAFANDDTVH (238 aa)) are disordered. Polar residues predominate over residues 128–137 (SLFSSGSPPD). Low complexity predominate over residues 141 to 154 (RNSTSNLSSVSTNS). Composition is skewed to polar residues over residues 159 to 177 (TIGS…ASQR), 199 to 213 (ALSS…NVTP), and 232 to 250 (SATN…SPSQ). Residues S247 and S281 each carry the phosphoserine modification. The segment covering 265 to 281 (SLSSSPSSEDSDLSLSS) has biased composition (low complexity). Composition is skewed to basic and acidic residues over residues 286 to 296 (DEKKQPSKSEK) and 313 to 325 (GSKE…KEKA). Phosphoserine is present on S335. Polar residues predominate over residues 338–356 (DTSTEYDSNSLRRSRSNPA).

This is an uncharacterized protein from Schizosaccharomyces pombe (strain 972 / ATCC 24843) (Fission yeast).